The sequence spans 241 residues: MSQVKYNRIILKISGEALAGEKGTGIDPTVIKKLAHEIKLVHDMGVQIGVVCGGGNMWRGETGAKLGMERAQADYMGMLATIMNGLALQDGLETAGVQTRLQTSISMRQVAEPYIRRVAISHMEKNRVVIFGGGTGNPYFSTDTTAALRAAEINADVILMAKNGVDGVYTADPNLDPSAKKFAELTQLDMISKGLQVMDRTASSLSMDTHIPLIVFNVNTPGNIKRVVEGENIGTIIRGDK.

Residue 12–15 coordinates ATP; that stretch reads KISG. An involved in allosteric activation by GTP region spans residues 20–25; the sequence is GEKGTG. Position 54 (glycine 54) interacts with UMP. ATP contacts are provided by glycine 55 and arginine 59. UMP contacts are provided by residues aspartate 74 and 135-142; that span reads TGNPYFST. 3 residues coordinate ATP: asparagine 163, tyrosine 169, and aspartate 172.

It belongs to the UMP kinase family. In terms of assembly, homohexamer.

Its subcellular location is the cytoplasm. The enzyme catalyses UMP + ATP = UDP + ADP. The protein operates within pyrimidine metabolism; CTP biosynthesis via de novo pathway; UDP from UMP (UMPK route): step 1/1. Allosterically activated by GTP. Inhibited by UTP. Its function is as follows. Catalyzes the reversible phosphorylation of UMP to UDP. The protein is Uridylate kinase of Lactobacillus delbrueckii subsp. bulgaricus (strain ATCC 11842 / DSM 20081 / BCRC 10696 / JCM 1002 / NBRC 13953 / NCIMB 11778 / NCTC 12712 / WDCM 00102 / Lb 14).